A 64-amino-acid chain; its full sequence is Large ribosomal subunit protein uL29 (64 aa).

Belongs to the universal ribosomal protein uL29 family.

The sequence is that of Large ribosomal subunit protein uL29 from Solidesulfovibrio magneticus (strain ATCC 700980 / DSM 13731 / RS-1) (Desulfovibrio magneticus).